The following is a 479-amino-acid chain: 5-hydroxytryptamine receptor 7 (479 aa).

Residues 1–83 (MMDVNSSGRP…INYGRVEKVV (83 aa)) are Extracellular-facing. Asn-5 and Asn-66 each carry an N-linked (GlcNAc...) asparagine glycan. The helical transmembrane segment at 84–108 (IGSILTLITLLTIAGNCLVVISVCF) threads the bilayer. Topologically, residues 109–118 (VKKLRQPSNY) are cytoplasmic. Residues 119–140 (LIVSLALADLSVAVAVMPFVSV) traverse the membrane as a helical segment. The Extracellular portion of the chain corresponds to 141–152 (TDLIGGKWIFGH). A helical membrane pass occupies residues 153-178 (FFCNVFIAMDVMCCTASIMTLCVISI). Cys-155 and Cys-231 are oxidised to a cystine. Serotonin is bound at residue Asp-162. Residues 179–198 (DRYLGITRPLTYPVRQNGKC) lie on the Cytoplasmic side of the membrane. Residues 199 to 219 (MAKMILSVWLLSASITLPPLF) traverse the membrane as a helical segment. Residues 220 to 237 (GWAQNVNDDKVCLISQDF) lie on the Extracellular side of the membrane. The helical transmembrane segment at 238–260 (GYTIYSTAVAFYIPMSVMLFMYY) threads the bilayer. The Cytoplasmic portion of the chain corresponds to 261 to 326 (QIYKAARKSA…SIFKREQKAA (66 aa)). Residues 327-352 (TTLGIIVGAFTVCWLPFFLLSTARPF) traverse the membrane as a helical segment. At 353 to 363 (ICGTSCSCIPL) the chain is on the extracellular side. The helical transmembrane segment at 364–387 (WVERTFLWLGYANSLINPFIYAFF) threads the bilayer. Topologically, residues 388–479 (NRDLRTTYRS…TVEKKVMIHD (92 aa)) are cytoplasmic. Cys-401 carries S-palmitoyl cysteine lipidation.

The protein belongs to the G-protein coupled receptor 1 family. As to expression, predominant isoform in spleen, caudate and hippocampus. In terms of tissue distribution, expressed at lower levels. Minor isoform in terms of expression.

Its subcellular location is the cell membrane. G-protein coupled receptor for 5-hydroxytryptamine (serotonin), a biogenic hormone that functions as a neurotransmitter, a hormone and a mitogen. Ligand binding causes a conformation change that triggers signaling via guanine nucleotide-binding proteins (G proteins) and modulates the activity of downstream effectors. HTR7 is coupled to G(s) G alpha proteins and mediates activation of adenylate cyclase activity. This Homo sapiens (Human) protein is 5-hydroxytryptamine receptor 7.